Reading from the N-terminus, the 377-residue chain is 23S rRNA (uracil(747)-C(5))-methyltransferase RlmC (377 aa).

Residues Cys3, Cys11, Cys14, and Cys87 each contribute to the [4Fe-4S] cluster site. 4 residues coordinate S-adenosyl-L-methionine: Gln212, Phe241, Glu262, and Asn307. The active-site Nucleophile is the Cys334.

The protein belongs to the class I-like SAM-binding methyltransferase superfamily. RNA M5U methyltransferase family. RlmC subfamily.

The catalysed reaction is uridine(747) in 23S rRNA + S-adenosyl-L-methionine = 5-methyluridine(747) in 23S rRNA + S-adenosyl-L-homocysteine + H(+). Catalyzes the formation of 5-methyl-uridine at position 747 (m5U747) in 23S rRNA. This chain is 23S rRNA (uracil(747)-C(5))-methyltransferase RlmC, found in Proteus mirabilis (strain HI4320).